The primary structure comprises 46 residues: DNA-directed RNA polymerase subunit Rpo12 (46 aa).

3 residues coordinate Zn(2+): cysteine 9, cysteine 24, and cysteine 27.

This sequence belongs to the archaeal Rpo12/eukaryotic RPC10 RNA polymerase subunit family. In terms of assembly, part of the RNA polymerase complex. Interacts with Rpo3. Forms an Rpo3-Rpo10-Rpo11-Rpo12 complex upon coexpression. The cofactor is Zn(2+).

The protein localises to the cytoplasm. It carries out the reaction RNA(n) + a ribonucleoside 5'-triphosphate = RNA(n+1) + diphosphate. Functionally, DNA-dependent RNA polymerase (RNAP) catalyzes the transcription of DNA into RNA using the four ribonucleoside triphosphates as substrates. This chain is DNA-directed RNA polymerase subunit Rpo12, found in Methanocaldococcus jannaschii (strain ATCC 43067 / DSM 2661 / JAL-1 / JCM 10045 / NBRC 100440) (Methanococcus jannaschii).